Here is a 300-residue protein sequence, read N- to C-terminus: Acetylglutamate kinase (300 aa).

Substrate contacts are provided by residues 68–69 (GG), Arg90, and Asn194.

Belongs to the acetylglutamate kinase family. ArgB subfamily.

Its subcellular location is the cytoplasm. The catalysed reaction is N-acetyl-L-glutamate + ATP = N-acetyl-L-glutamyl 5-phosphate + ADP. Its pathway is amino-acid biosynthesis; L-arginine biosynthesis; N(2)-acetyl-L-ornithine from L-glutamate: step 2/4. Functionally, catalyzes the ATP-dependent phosphorylation of N-acetyl-L-glutamate. In Methanocaldococcus jannaschii (strain ATCC 43067 / DSM 2661 / JAL-1 / JCM 10045 / NBRC 100440) (Methanococcus jannaschii), this protein is Acetylglutamate kinase.